The chain runs to 201 residues: Oligoribonuclease (201 aa).

Residues 20-183 (LVWLDMEMTG…ADIHESIDEL (164 aa)) enclose the Exonuclease domain. Tyr141 is an active-site residue.

This sequence belongs to the oligoribonuclease family.

The protein resides in the cytoplasm. 3'-to-5' exoribonuclease specific for small oligoribonucleotides. This chain is Oligoribonuclease, found in Burkholderia pseudomallei (strain 1106a).